The chain runs to 176 residues: Probable inosine/xanthosine triphosphatase (176 aa).

Residue aspartate 36 coordinates Mg(2+).

The protein belongs to the YjjX NTPase family. As to quaternary structure, homodimer. The cofactor is Mg(2+). Mn(2+) is required as a cofactor.

It catalyses the reaction XTP + H2O = XDP + phosphate + H(+). It carries out the reaction ITP + H2O = IDP + phosphate + H(+). In terms of biological role, phosphatase that hydrolyzes non-canonical purine nucleotides such as XTP and ITP to their respective diphosphate derivatives. Probably excludes non-canonical purines from DNA/RNA precursor pool, thus preventing their incorporation into DNA/RNA and avoiding chromosomal lesions. The polypeptide is Probable inosine/xanthosine triphosphatase (Saccharolobus islandicus (strain Y.G.57.14 / Yellowstone #1) (Sulfolobus islandicus)).